The sequence spans 662 residues: DNA ligase (662 aa).

NAD(+) is bound by residues 31 to 35 and 79 to 80; these read DKDYD and SL. The N6-AMP-lysine intermediate role is filled by K121. NAD(+) is bound by residues R143, E177, and K313. C406, C409, C422, and C428 together coordinate Zn(2+). Positions 586 to 662 constitute a BRCT domain; sequence VLESPFMGKT…LSEEEFENMI (77 aa).

This sequence belongs to the NAD-dependent DNA ligase family. LigA subfamily. Mg(2+) is required as a cofactor. Mn(2+) serves as cofactor.

The enzyme catalyses NAD(+) + (deoxyribonucleotide)n-3'-hydroxyl + 5'-phospho-(deoxyribonucleotide)m = (deoxyribonucleotide)n+m + AMP + beta-nicotinamide D-nucleotide.. In terms of biological role, DNA ligase that catalyzes the formation of phosphodiester linkages between 5'-phosphoryl and 3'-hydroxyl groups in double-stranded DNA using NAD as a coenzyme and as the energy source for the reaction. It is essential for DNA replication and repair of damaged DNA. This Clostridium perfringens (strain ATCC 13124 / DSM 756 / JCM 1290 / NCIMB 6125 / NCTC 8237 / Type A) protein is DNA ligase.